Here is a 287-residue protein sequence, read N- to C-terminus: 3-alpha-hydroxysteroid sulfotransferase (287 aa).

K44 to W49 contributes to the 3'-phosphoadenylyl sulfate binding site. The substrate site is built by W72 and W77. H99 acts as the Proton acceptor in catalysis. Residues R121, S129, Y184, S218 to M223, and R247 to G249 each bind 3'-phosphoadenylyl sulfate.

The protein belongs to the sulfotransferase 1 family. In terms of assembly, homodimer. As to expression, adrenal gland and liver.

Its subcellular location is the cytoplasm. It carries out the reaction an alcohol + 3'-phosphoadenylyl sulfate = an alkyl sulfate + adenosine 3',5'-bisphosphate + H(+). Its function is as follows. Sulfotransferase that utilizes 3'-phospho-5'-adenylyl sulfate (PAPS) as sulfonate donor to catalyze the sulfonation of 3-alpha-hydroxyl groups of neutral steroids. In Cavia porcellus (Guinea pig), this protein is 3-alpha-hydroxysteroid sulfotransferase (STD1).